The sequence spans 80 residues: Venom protein HGE029 (80 aa).

Positions 1 to 22 (MNAKAFLAIFMIALLITDRAEA) are cleaved as a signal peptide.

This sequence belongs to the non-disulfide-bridged peptide (NDBP) superfamily. Long chain multifunctional peptide (group 2) family. As to expression, expressed by the venom gland.

The protein resides in the secreted. The sequence is that of Venom protein HGE029 from Hoffmannihadrurus gertschi (Scorpion).